A 240-amino-acid polypeptide reads, in one-letter code: HTH-type transcriptional repressor STM4068 (240 aa).

In terms of domain architecture, HTH gntR-type spans 9-77 (TPLYKQLFFI…RGSGSVVCSV (69 aa)). Positions 37-56 (QKEIARSYNVSLIVVKQAWS) form a DNA-binding region, H-T-H motif.

Functionally, represses the expression of the STM4065-STM4067 operon. This Salmonella typhimurium (strain LT2 / SGSC1412 / ATCC 700720) protein is HTH-type transcriptional repressor STM4068.